Here is a 411-residue protein sequence, read N- to C-terminus: Methylthioribose-1-phosphate isomerase (411 aa).

The Proton donor role is filled by aspartate 284.

It belongs to the eIF-2B alpha/beta/delta subunits family. MtnA subfamily.

It localises to the cytoplasm. It is found in the nucleus. It catalyses the reaction 5-(methylsulfanyl)-alpha-D-ribose 1-phosphate = 5-(methylsulfanyl)-D-ribulose 1-phosphate. The protein operates within amino-acid biosynthesis; L-methionine biosynthesis via salvage pathway; L-methionine from S-methyl-5-thio-alpha-D-ribose 1-phosphate: step 1/6. Functionally, catalyzes the interconversion of methylthioribose-1-phosphate (MTR-1-P) into methylthioribulose-1-phosphate (MTRu-1-P). The chain is Methylthioribose-1-phosphate isomerase from Komagataella phaffii (strain GS115 / ATCC 20864) (Yeast).